The sequence spans 2090 residues: MLRVFILFAENVHTPDSDISDAYCSAVFAGVKKRTKVIKNSVNPVWNEGFEWDLKGIPLDQSSELLVVVKDHETMGRNRFLGEAKIPLQEVLATPSLSASFNAPLLDAKQQPTGASLVLQVSYTPPPGAVPLFPPPASLAPSPTLPDMDLVPDTGGEEDTEDQGLTGDEAEPFLDQSAAVGPGGPTTPRKPPSHPPPHYPGAKRKRSSAPPRKLLSDKPQDFQIRVQVIEGRQLPGVNIKPVVKVTAAGQTKRTRIQKGNSPLFNETLFFNVFDSPLELFDEPIFITVVDSRSLRTDALLGEFRMDVGTVYREPRHAYLRKWLLLSDPDDFSAGARGYLKASLCVLGPGDEAPLDKKDPSEDKEDIEGNLLRPTGVALRGAHFCLKLFRAEDLPQMDDAVMDNVKQIFGFDSNKKNLVDPFVEVSFAGKMLCSKILEKTANPQWNQNITLPAMFPSMCEKMRIRVMDWDRLTHNDTVATTYLGMSKISATGGEIEEEPAGVLKSPQATDLDDNLGFLPTFGPCYVNLYGSPREFTGFPDPYAELNTGKGEGVAYRGRVLLSLETKLVEHSEQKVEDLPADDILRVEKYLRRRKYSLFAAFYSATMLQDVDDAIQFEVSIGNYGNKFDTTCLPLASTTQYSRAVFDGGSLPLPVGCHYYYLPWGNVKPVVVLSSYWEDISHRIEIQNQLLRVADRLEANLEQVHLALKAQCSSEDVDALVAQLTDELLADCSQPLCDIHEIPSATHLDQYLLRLRTRHLSQIKEAALALKLGHSELSTALEQAEDWLLHLRALAEEPQNSLPDIIIWMLQGDKRVAYQRVPAHEVLFSRRGPSYCGRNCGKLQTIFLKYPMEGMPGARMPVQIRIKLWFGLSVDEKEFNQFAEGKLSVFAETYENQTKLALVGNWGTTGLTYPKFSDVTGKIKLPKDSFRPSAGWAWAGDWFVCPEKTLLHDADAGHLSFVEEVFENQTRLPGGQWIYMSDNYTDVNGEKVLPKDDIECPLGWKWEDEEWSTDLNRAVDEQGWEYSITIPPDRKPKHWVPVEKMYYTHRRRRWVRLRRRDLSQMEALKRHRQAEAEGEGWEYASLFGWKFHLEYRKTDAFRRRRWRRRMEPLEKTGPAAVFALEGALGGMVDDKSEDSMSVSTLSFGVNRPTISCIFDYGNRYHLRCYLYQARDLPAMDKDSFSDPYAIVSFLHQSQKTVVEKNTLNPTWDQTLIFYEIEIFGEPASIAEHPPCIVVELYDHDTYGADEFMGRCICQPSLERMPRLAWFPLTRGSQPAGELLAAFELIQREKPAIHHIPGFEMHETSRILDETEDTDLPYPPPQREANIYMVPQNIKPALQRTAIEILAWGLRNMKSYQMASISSPSLVVECGGQTVQSCVIRNLRKNPNFDVCTLFMEVMLPREDLYCPPIVVKVIDNRQFGRRPVVGQCTIRSLENFLCDPYSAESPSPQGGPDDVSLLSPGEDVLIDIDDKEPLIPVQEEEFIDWWSKFFASVGEREKCGSYLEKDFDTLKVYDTQLENVEAFGGLSDFCNTFKLYRGRTQEETDDPSVIGEFKGLFKIYPLPEDPAIPMPPRQFHQLAAQGPQECLVRIYIVRAFGLQPKDPNGKCDPYIKISIGKKSVSDQDNYIPCTLEPVFGKMFELTCTLPLEKDLKITLYDYDLLSKDEKIGETVIDLENRLLSKFGARCGLPQTYCVSGPNQWRDQLRPSQLLHLFCQQHRIKAPVYRTDRVTFQDKDYTIEEIEAGRLPNPHLGPVEERLALHVLQQQGLVPEHVESRPLYSPLQPDIEQGKLQMWIDIFPKVLGRPGPPFNITPRKARRFFLRCIIWNTKDVILDDLSLTGEKMSDIYVKGWMVGFEEHKQKTDVHYRSLGGEGNFNWRFVFPFDYLPAEQVCAVAKKDAFWRLDKTESKIPARVVFQIWDNDKFSFDDFLGSLQLDLNRMPKPAKTAEKCSLDQLDDTFHPEWFVSLFEQKTVKGWWPCVTEEGEKKMLAGKLEMTLEIVAESEHEERPAGQGRDEPNMNPKLEDPRRPDTSFLWFTSPYKTMKFILWRRFRCAIILFIILFILLLFLGVFVYAFPNYAAMKLVKPFR.

Residues 1–101 (MLRVFILFAE…LATPSLSASF (101 aa)) enclose the C2 1 domain. Residues 1–2056 (MLRVFILFAE…FILWRRFRCA (2056 aa)) lie on the Cytoplasmic side of the membrane. Ca(2+) contacts are provided by aspartate 18, isoleucine 19, aspartate 21, and asparagine 40. The segment at 130–217 (VPLFPPPASL…SAPPRKLLSD (88 aa)) is disordered. Over residues 155–172 (GGEEDTEDQGLTGDEAEP) the composition is skewed to acidic residues. Glycine 164 carries the post-translational modification Phosphoserine. Threonine 166 is modified (phosphothreonine). Glycine 167 is modified (phosphoserine). Residues 188 to 199 (PRKPPSHPPPHY) show a composition bias toward pro residues. 6 consecutive C2 domains span residues 206–323 (RSSA…RKWL), 362–498 (DKED…EEEP), 1146–1272 (GVNR…PLTR), 1320–1448 (PPPQ…AESP), 1571–1689 (PMPP…ARCG), and 1805–1953 (GRPG…EKCS). Alanine 209 bears the Phosphoserine mark. Proline 219 bears the Phosphothreonine mark. Aspartate 411, aspartate 419, aspartate 467, aspartate 469, aspartate 475, aspartate 1178, aspartate 1184, aspartate 1240, and aspartate 1242 together coordinate Ca(2+). Ca(2+)-binding residues include aspartate 1604, aspartate 1610, aspartate 1659, aspartate 1661, aspartate 1924, serine 1927, and aspartate 1930. A disordered region spans residues 2005-2027 (SEHEERPAGQGRDEPNMNPKLED). The chain crosses the membrane as a helical span at residues 2057–2077 (IILFIILFILLLFLGVFVYAF). At 2078–2090 (PNYAAMKLVKPFR) the chain is on the extracellular side.

Belongs to the ferlin family. In terms of assembly, interacts with CAV3. Interacts with AHNAK; the interaction is direct and Ca(2+)-independent. Interacts with AHNAK2; the interaction is direct and Ca(2+)-independent. Interacts with ANXA1; the interaction is Ca(2+)- and injury state-dependent. Interacts with ANXA2; the interaction is Ca(2+)- and injury state-dependent. Interacts with CACNA1S and PARVB. Interacts with TRIM72/MG53; interaction is required for transport to sites of cell injury during repair patch formation. Interacts with RIPOR2; this interaction occurs during early myogenic differentiation. It depends on Ca(2+) as a cofactor. As to expression, expressed in skeletal and cardiac muscles (at protein level). Expressed in skeletal muscle and heart. Also found in brain, liver and kidney.

The protein resides in the cell membrane. It localises to the sarcolemma. Its subcellular location is the cytoplasmic vesicle membrane. Functionally, key calcium ion sensor involved in the Ca(2+)-triggered synaptic vesicle-plasma membrane fusion. Plays a role in the sarcolemma repair mechanism of both skeletal muscle and cardiomyocytes that permits rapid resealing of membranes disrupted by mechanical stress. This Mus musculus (Mouse) protein is Dysferlin (Dysf).